Consider the following 525-residue polypeptide: Peptide chain release factor 3 (525 aa).

Residues 9–276 (AKRRTFAIIS…GFTTYAPEPQ (268 aa)) enclose the tr-type G domain. GTP-binding positions include 18-25 (SHPDAGKT), 86-90 (DTPGH), and 140-143 (NKFD).

This sequence belongs to the TRAFAC class translation factor GTPase superfamily. Classic translation factor GTPase family. PrfC subfamily.

The protein resides in the cytoplasm. Increases the formation of ribosomal termination complexes and stimulates activities of RF-1 and RF-2. It binds guanine nucleotides and has strong preference for UGA stop codons. It may interact directly with the ribosome. The stimulation of RF-1 and RF-2 is significantly reduced by GTP and GDP, but not by GMP. The sequence is that of Peptide chain release factor 3 from Francisella philomiragia subsp. philomiragia (strain ATCC 25017 / CCUG 19701 / FSC 153 / O#319-036).